Reading from the N-terminus, the 165-residue chain is MRPLILGLATAAATLVLDQATKLGLLLLADLPARQPVVLAPFAQLVVVWNRGVSYGLFQQHTELGRWLLVGVAVLAAAALGAWMARAGSRLLVLSLGLIVGGAVGNAVDRVAYGAVFDFVHLHAGGWSWYVFNVADAGIVAGVAGLLVETVWSEARGDAAMRPDG.

2 consecutive transmembrane segments (helical) span residues 64 to 84 and 88 to 108; these read LGRWLLVGVAVLAAAALGAWM and GSRLLVLSLGLIVGGAVGNAV. Residues D118 and D136 contribute to the active site. The helical transmembrane segment at 128–148 threads the bilayer; sequence SWYVFNVADAGIVAGVAGLLV.

This sequence belongs to the peptidase A8 family.

It is found in the cell inner membrane. It catalyses the reaction Release of signal peptides from bacterial membrane prolipoproteins. Hydrolyzes -Xaa-Yaa-Zaa-|-(S,diacylglyceryl)Cys-, in which Xaa is hydrophobic (preferably Leu), and Yaa (Ala or Ser) and Zaa (Gly or Ala) have small, neutral side chains.. It functions in the pathway protein modification; lipoprotein biosynthesis (signal peptide cleavage). Functionally, this protein specifically catalyzes the removal of signal peptides from prolipoproteins. The polypeptide is Lipoprotein signal peptidase (Methylobacterium sp. (strain 4-46)).